The primary structure comprises 100 residues: Large ribosomal subunit protein uL23 (100 aa).

It belongs to the universal ribosomal protein uL23 family. In terms of assembly, part of the 50S ribosomal subunit. Contacts protein L29, and trigger factor when it is bound to the ribosome.

In terms of biological role, one of the early assembly proteins it binds 23S rRNA. One of the proteins that surrounds the polypeptide exit tunnel on the outside of the ribosome. Forms the main docking site for trigger factor binding to the ribosome. The polypeptide is Large ribosomal subunit protein uL23 (Aliivibrio fischeri (strain MJ11) (Vibrio fischeri)).